The chain runs to 126 residues: MGKEKSPRRVADNEALSVGTQIRGSAQKLNLVAALIRGRKVEDAMNVLAFSKKAMAVDVRKVLASAVANAENNHNLDVDALVVKEASVGKSLSMKRWHARGRGKSTRIVKPFSRIRIVVREQEEEA.

It belongs to the universal ribosomal protein uL22 family. In terms of assembly, part of the 50S ribosomal subunit.

This protein binds specifically to 23S rRNA; its binding is stimulated by other ribosomal proteins, e.g. L4, L17, and L20. It is important during the early stages of 50S assembly. It makes multiple contacts with different domains of the 23S rRNA in the assembled 50S subunit and ribosome. Its function is as follows. The globular domain of the protein is located near the polypeptide exit tunnel on the outside of the subunit, while an extended beta-hairpin is found that lines the wall of the exit tunnel in the center of the 70S ribosome. The polypeptide is Large ribosomal subunit protein uL22 (Sphingopyxis alaskensis (strain DSM 13593 / LMG 18877 / RB2256) (Sphingomonas alaskensis)).